A 257-amino-acid chain; its full sequence is Adenylate kinase (257 aa).

52–57 (GAGKGT) provides a ligand contact to ATP. The tract at residues 72–101 (ATGDMLRSQVAKKTELGKEAKKIMDQGGLV) is NMP. AMP is bound by residues Thr-73, Arg-78, 99-101 (GLV), 128-131 (GFPR), and Gln-135. Residues 169 to 206 (GRLVHPASGRSYHKIFNPPKNEMLDDITGEPLIQRSDD) form an LID region. Residues Arg-170 and 179–180 (SY) each bind ATP. AMP contacts are provided by Arg-203 and Arg-214. Gln-242 contributes to the ATP binding site.

This sequence belongs to the adenylate kinase family. AK2 subfamily. In terms of assembly, monomer.

Its subcellular location is the cytoplasm. The protein resides in the cytosol. It localises to the mitochondrion intermembrane space. The catalysed reaction is AMP + ATP = 2 ADP. In terms of biological role, catalyzes the reversible transfer of the terminal phosphate group between ATP and AMP. Plays an important role in cellular energy homeostasis and in adenine nucleotide metabolism. Adenylate kinase activity is critical for regulation of the phosphate utilization and the AMP de novo biosynthesis pathways. The polypeptide is Adenylate kinase (adk1) (Aspergillus clavatus (strain ATCC 1007 / CBS 513.65 / DSM 816 / NCTC 3887 / NRRL 1 / QM 1276 / 107)).